We begin with the raw amino-acid sequence, 409 residues long: Putative kinase Y4dM (409 aa).

D293 serves as the catalytic Proton acceptor.

This sequence belongs to the HipA Ser/Thr kinase family.

This chain is Putative kinase Y4dM, found in Sinorhizobium fredii (strain NBRC 101917 / NGR234).